Reading from the N-terminus, the 224-residue chain is SPI-2 type 3 secretion system stator protein (224 aa).

This sequence belongs to the SctL stator family. In terms of assembly, the core secretion machinery of the T3SS is composed of approximately 20 different proteins, including cytoplasmic components, a base, an export apparatus and a needle. This subunit is part of the cytosolic complex. Interacts directly with SsaN/SctN2 (T3SS-2 ATPase).

It is found in the cytoplasm. Its function is as follows. Component of the type III secretion system (T3SS), also called injectisome, which is used to inject bacterial effector proteins into eukaryotic host cells. Acts as a regulator of the SsaN/SctN2 ATPase activity. This is SPI-2 type 3 secretion system stator protein from Salmonella typhimurium (strain LT2 / SGSC1412 / ATCC 700720).